Here is a 677-residue protein sequence, read N- to C-terminus: Methionine--tRNA ligase (677 aa).

The short motif at 15 to 25 is the 'HIGH' region element; sequence PYANGSIHLGH. 4 residues coordinate Zn(2+): C146, C149, C159, and C162. A 'KMSKS' region motif is present at residues 333 to 337; the sequence is KMSKS. K336 contributes to the ATP binding site. The region spanning 575–677 is the tRNA-binding domain; it reads DFAKIDLRVA…DGAKPGQQVK (103 aa).

It belongs to the class-I aminoacyl-tRNA synthetase family. MetG type 1 subfamily. As to quaternary structure, homodimer. Zn(2+) is required as a cofactor.

Its subcellular location is the cytoplasm. The enzyme catalyses tRNA(Met) + L-methionine + ATP = L-methionyl-tRNA(Met) + AMP + diphosphate. Is required not only for elongation of protein synthesis but also for the initiation of all mRNA translation through initiator tRNA(fMet) aminoacylation. The protein is Methionine--tRNA ligase of Salmonella paratyphi A (strain AKU_12601).